The following is a 212-amino-acid chain: Ribosomal RNA small subunit methyltransferase G (212 aa).

Residues glycine 80, leucine 85, 131-132 (AE), and arginine 146 each bind S-adenosyl-L-methionine.

This sequence belongs to the methyltransferase superfamily. RNA methyltransferase RsmG family.

It localises to the cytoplasm. It catalyses the reaction guanosine(527) in 16S rRNA + S-adenosyl-L-methionine = N(7)-methylguanosine(527) in 16S rRNA + S-adenosyl-L-homocysteine. Functionally, specifically methylates the N7 position of guanine in position 527 of 16S rRNA. The chain is Ribosomal RNA small subunit methyltransferase G from Xanthomonas axonopodis pv. citri (strain 306).